Consider the following 838-residue polypeptide: Collagen alpha-2(I) chain (838 aa).

Residues 1–838 (GPMGIMGPRG…GTVGPAGIRS (838 aa)) are disordered. The span at 11 to 38 (FQGPAGEPGEPGQTGPAGARGPAGPPGK) shows a compositional bias: low complexity. The span at 39-53 (AGEDGHPGKPGRPGE) shows a compositional bias: basic and acidic residues. 4 stretches are compositionally biased toward low complexity: residues 101 to 122 (SRGSDGSVGPVGPAGPIGSAGP), 137 to 147 (PVGNTGPAGPA), 215 to 236 (NGESGSSGPTGPPGIRGSRGIP), and 329 to 344 (AGNRGAPGPDGNNGAQ). Over residues 351–360 (GVQGGKGEQG) the composition is skewed to gly residues. Low complexity-rich tracts occupy residues 407-424 (PGESGAAGPSGPIGSRGP) and 436-446 (EPGVVGAPGTA). Residues 447-456 (GPAGSGGIPG) are compositionally biased toward gly residues. Low complexity-rich tracts occupy residues 479-523 (VGTT…PRGT), 530-550 (VGPAGPNGFAGPAGAAGQPGA), and 568-581 (SAGPAGPDGTPGPA). Residues 582–591 (GSRGDGGPPG) show a composition bias toward gly residues. Residues 593–602 (TGFPGAAGRT) are compositionally biased toward low complexity. Positions 633 to 642 (GETGAGGPPG) are enriched in gly residues. A compositionally biased stretch (low complexity) spans 649-689 (TAGPQGIIGAPGIIGIPGSRGIPGVSGSVGEPGPIGISGPP). Over residues 693–702 (GPSGGVGNPG) the composition is skewed to gly residues. Composition is skewed to low complexity over residues 703–718 (VNGAPGEAGRDGNPGN), 736–758 (YAGNPGPVGAAGAPGPHGSVGPA), and 766–781 (EPGPVGSVGPVGAIGP).

Belongs to the fibrillar collagen family. As to quaternary structure, trimers of one alpha 2(I) and two alpha 1(I) chains. Interacts (via C-terminus) with TMEM131 (via PapD-L domain); the interaction is direct and is involved in assembly and TRAPPIII ER-to-Golgi transport complex-dependent secretion of collagen. In terms of processing, prolines at the third position of the tripeptide repeating unit (G-X-Y) are hydroxylated in some or all of the chains. Forms the fibrils of tendon, ligaments and bones. In bones, the fibrils are mineralized with calcium hydroxyapatite.

It is found in the secreted. Its subcellular location is the extracellular space. The protein resides in the extracellular matrix. Functionally, type I collagen is a member of group I collagen (fibrillar forming collagen). This chain is Collagen alpha-2(I) chain, found in Cyclopes didactylus (Silky anteater).